The sequence spans 311 residues: MTKLLFMGTPDFSATVLKGILADGKYDVLAVVTQPDRAVGRKKEIKMTPVKEVALENNIPVYQPEKLSGSPELEQLMTLGADGIVTAAFGQFLPTKLLESVGFAINVHASLLPKYRGGAPIHYAIINGEKEAGVTIMEMVAKMDAGDMVSKASVEITDEDNVGTMFDRLAVVGRDLLLDTLPGYLSGDIKPIPQNEEEVSFSPNISPDEERIDWNKSSRDIFNHVRGMYPWPVAHTLLEGNRFKLYEVTMSEGKGSPGQVIAKTKNSLTVATGDGAIELKSVQPAGKPRMDIKDFLNGVGRNLEIGDKFGE.

110 to 113 (SLLP) is a (6S)-5,6,7,8-tetrahydrofolate binding site.

Belongs to the Fmt family.

The catalysed reaction is L-methionyl-tRNA(fMet) + (6R)-10-formyltetrahydrofolate = N-formyl-L-methionyl-tRNA(fMet) + (6S)-5,6,7,8-tetrahydrofolate + H(+). In terms of biological role, attaches a formyl group to the free amino group of methionyl-tRNA(fMet). The formyl group appears to play a dual role in the initiator identity of N-formylmethionyl-tRNA by promoting its recognition by IF2 and preventing the misappropriation of this tRNA by the elongation apparatus. The sequence is that of Methionyl-tRNA formyltransferase from Streptococcus agalactiae serotype Ia (strain ATCC 27591 / A909 / CDC SS700).